The chain runs to 116 residues: Large ribosomal subunit protein bL17 (116 aa).

It belongs to the bacterial ribosomal protein bL17 family. In terms of assembly, part of the 50S ribosomal subunit. Contacts protein L32.

This Synechococcus sp. (strain CC9902) protein is Large ribosomal subunit protein bL17.